A 505-amino-acid polypeptide reads, in one-letter code: Peroxisome proliferator-activated receptor gamma (505 aa).

Thr84 carries an O-linked (GlcNAc) threonine glycan. Ser112 carries the post-translational modification Phosphoserine; by MAPK. The nuclear receptor DNA-binding region spans 136 to 210; that stretch reads AIECRVCGDK…VGMSHNAIRF (75 aa). NR C4-type zinc fingers lie at residues 139–159 and 176–198; these read CRVC…CEGC and CDLN…FQKC. Residues 205-280 are interaction with FAM120B; sequence HNAIRFGRMP…DKSPFVIYDM (76 aa). One can recognise an NR LBD domain in the interval 238–503; sequence DLRALAKHLY…HPLLQEIYKD (266 aa). Lys252 is covalently cross-linked (Glycyl lysine isopeptide (Lys-Gly) (interchain with G-Cter in ubiquitin)). The 9aaTAD signature appears at 495–503; the sequence is PLLQEIYKD.

Belongs to the nuclear hormone receptor family. NR1 subfamily. Heterodimer with other nuclear receptors, such as RXRA. The heterodimer with the retinoic acid receptor RXRA is called adipocyte-specific transcription factor ARF6. Interacts with NCOA6 coactivator, leading to a strong increase in transcription of target genes. Interacts with coactivator PPARBP, leading to a mild increase in transcription of target genes. Interacts with NOCA7 in a ligand-inducible manner. Interacts with NCOA1 and NCOA2 LXXLL motifs. Interacts with ASXL1, ASXL2, DNTTIP2, FAM120B, MAP2K1/MEK1, NR0B2, PDPK1, PRDM16, PRMT2 and TGFB1I1. Interacts (when activated by agonist) with PPP5C. Interacts with HELZ2 and THRAP3; the interaction stimulates the transcriptional activity of PPARG. Interacts with PER2, the interaction is ligand dependent and blocks PPARG recruitment to target promoters. Interacts with NOCT. Interacts with FOXO1 (acetylated form). Interacts with ACTN4. Interacts (when in the liganded conformation) with GPS2. Interacts with CRY1 and CRY2 in a ligand-dependent manner. In the absence of hormonal ligand, interacts with TACC1. In macrophages, interacts with PAQR3 and STUB1; the interactions promote PPARG poylubiquitination and STUB1-mediated degradation. Post-translationally, O-GlcNAcylation at Thr-84 reduces transcriptional activity in adipocytes. In terms of processing, phosphorylated in basal conditions and dephosphorylated when treated with the ligand. May be dephosphorylated by PPP5C. The phosphorylated Ser-112 form is recognized by PER2 and repressed, dephosphorylation at Ser-112 induces adipogenic activity. Ser-112 phosphorylation levels are reduced by 65% in brown adipose tissue compared to white adipose tissue. Ubiquitinated by E3 ubiquitin-protein ligase complex containing FBXO9; leading to proteasomal degradation. Post-translationally, ubiquitinated by E3 ubiquitin-protein ligase complex containing FBXO9; leading to proteasomal degradation. Ubiquitinated at Lys-252 by TRIM55 leading to proteasomal degradation. Ubiquitinated by E3 ubiquitin-protein ligase STUB1/CHIP; leading to proteasomal degradation. In terms of tissue distribution, highest expression in white and brown adipose tissue. Also found in liver, skeletal muscle, heart, adrenal gland, spleen, kidney and intestine. Isoform 2 is more abundant than isoform 1 in adipose tissue.

The protein localises to the nucleus. It is found in the cytoplasm. With respect to regulation, PDPK1 activates its transcriptional activity independently of its kinase activity. Nuclear receptor that binds peroxisome proliferators such as hypolipidemic drugs and fatty acids. Once activated by a ligand, the nuclear receptor binds to DNA specific PPAR response elements (PPRE) and modulates the transcription of its target genes, such as acyl-CoA oxidase. It therefore controls the peroxisomal beta-oxidation pathway of fatty acids. Key regulator of adipocyte differentiation and glucose homeostasis. ARF6 acts as a key regulator of the tissue-specific adipocyte P2 (aP2) enhancer. Acts as a critical regulator of gut homeostasis by suppressing NF-kappa-B-mediated pro-inflammatory responses. Plays a role in the regulation of cardiovascular circadian rhythms by regulating the transcription of BMAL1 in the blood vessels. The protein is Peroxisome proliferator-activated receptor gamma (Pparg) of Mus musculus (Mouse).